Reading from the N-terminus, the 525-residue chain is Ubiquitin carboxyl-terminal hydrolase 22 (525 aa).

The UBP-type zinc-finger motif lies at 21-138 (PGCSHLGSFK…KEEQRKAWKM (118 aa)). 12 residues coordinate Zn(2+): Cys-23, His-25, Cys-63, Cys-66, Cys-76, Cys-79, Cys-84, His-89, His-93, His-99, Cys-112, and Cys-115. Lys-129 is subject to N6-acetyllysine. A Phosphothreonine; by CDK1 modification is found at Thr-147. The region spanning 176 to 520 (RGLINLGNTC…EGYLLFYHKQ (345 aa)) is the USP domain. Residue Cys-185 is the Nucleophile of the active site. Ser-237 is subject to Phosphoserine; by CDK1. His-479 acts as the Proton acceptor in catalysis.

The protein belongs to the peptidase C19 family. UBP8 subfamily. Component of some SAGA transcription coactivator-HAT complexes, at least composed of ATXN7, ATXN7L3, ENY2, GCN5L2, SUPT3H, TAF10, TRRAP and USP22. Within the SAGA complex, ATXN7L3, ENY2 and USP22 form a subcomplex required for histone deubiquitination. Interacts directly with ATXN7L3; leading to its recruitment to the SAGA complex. Interacts with ATXN7L3 and weakly with ATXN7L3B. Interacts with MED1. In terms of processing, phosphorylated in G2/M phase, but not in G1 phase by CDK1. Ubiquitinated and subsequently degraded in a CDC20-dependent manner. In terms of tissue distribution, moderately expressed in various tissues including heart and skeletal muscle, and weakly expressed in lung and liver.

It is found in the nucleus. Its subcellular location is the cytoplasm. The enzyme catalyses Thiol-dependent hydrolysis of ester, thioester, amide, peptide and isopeptide bonds formed by the C-terminal Gly of ubiquitin (a 76-residue protein attached to proteins as an intracellular targeting signal).. Its function is as follows. Deubiquitinase that plays a role in several cellular processes including transcriptional regulation, cell cycle progression or innate immunity. As part of the transcription regulatory histone acetylation (HAT) complex SAGA, catalyzes the deubiquitination of both histones H2A and H2B, thereby acting as a transcriptional coactivator. Recruited to specific gene promoters by activators such as MYC, where it is required for transcription. Facilitates cell-cycle progression by stabilizing CCNB1 and antagonizing its proteasome-mediated degradation in a cell cycle-specific manner. Modulates cell cycle progression and apoptosis also by antagonizing TP53 transcriptional activation through deacetylase SIRT1 stabilization. Plays multiple roles in immunity and inflammation. Participates in antiviral response by deubiquitinating the importin KPNA2, leading to IRF3 nuclear translocation and subsequent type I interferon production. Acts as a central regulator of type III IFN signaling by negatively regulating STING1 activation and ubiquitination. Inhibits NLRP3 inflammasome activation by promoting NLRP3 degradation through ATG5-dependent autophagy. Deubiquitinates CD274 to induce its stabilization and thereby participates in maintenance of immune tolerance to self. Controls necroptotic cell death by regulating RIPK3 phosphorylation and ubiquitination. During bacterial infection, promotes pro-inflammatory response by targeting TRAF6 and removing its 'Lys-48'-linked polyubiquitination. The sequence is that of Ubiquitin carboxyl-terminal hydrolase 22 (USP22) from Homo sapiens (Human).